The primary structure comprises 148 residues: Sec-independent protein translocase protein TatB (148 aa).

Residues 1–21 (MFDIGFWELVVIGIVALVVLG) form a helical membrane-spanning segment.

This sequence belongs to the TatB family. The Tat system comprises two distinct complexes: a TatABC complex, containing multiple copies of TatA, TatB and TatC subunits, and a separate TatA complex, containing only TatA subunits. Substrates initially bind to the TatABC complex, which probably triggers association of the separate TatA complex to form the active translocon.

Its subcellular location is the cell inner membrane. Part of the twin-arginine translocation (Tat) system that transports large folded proteins containing a characteristic twin-arginine motif in their signal peptide across membranes. Together with TatC, TatB is part of a receptor directly interacting with Tat signal peptides. TatB may form an oligomeric binding site that transiently accommodates folded Tat precursor proteins before their translocation. This is Sec-independent protein translocase protein TatB from Aeromonas salmonicida (strain A449).